Consider the following 148-residue polypeptide: Glutamyl-tRNA(Gln) amidotransferase subunit C, mitochondrial (148 aa).

The protein belongs to the GatC family. As to quaternary structure, subunit of the heterotrimeric GatCAB amidotransferase (AdT) complex, composed of A, B and C subunits.

Its subcellular location is the mitochondrion. It carries out the reaction L-glutamyl-tRNA(Gln) + L-glutamine + ATP + H2O = L-glutaminyl-tRNA(Gln) + L-glutamate + ADP + phosphate + H(+). In terms of biological role, allows the formation of correctly charged Gln-tRNA(Gln) through the transamidation of misacylated Glu-tRNA(Gln) in the mitochondria. The reaction takes place in the presence of glutamine and ATP through an activated gamma-phospho-Glu-tRNA(Gln). In Drosophila yakuba (Fruit fly), this protein is Glutamyl-tRNA(Gln) amidotransferase subunit C, mitochondrial.